The following is a 294-amino-acid chain: Methionine aminopeptidase (294 aa).

His-65 is a substrate binding site. Residues Asp-85, Asp-96, and His-156 each coordinate a divalent metal cation. His-164 serves as a coordination point for substrate. Residues Glu-189 and Glu-279 each contribute to the a divalent metal cation site.

The protein belongs to the peptidase M24A family. Methionine aminopeptidase archaeal type 2 subfamily. Monomer. It depends on Co(2+) as a cofactor. The cofactor is Zn(2+). Requires Mn(2+) as cofactor. Fe(2+) is required as a cofactor.

It catalyses the reaction Release of N-terminal amino acids, preferentially methionine, from peptides and arylamides.. Functionally, removes the N-terminal methionine from nascent proteins. The N-terminal methionine is often cleaved when the second residue in the primary sequence is small and uncharged (Met-Ala-, Cys, Gly, Pro, Ser, Thr, or Val). The polypeptide is Methionine aminopeptidase (Methanocaldococcus jannaschii (strain ATCC 43067 / DSM 2661 / JAL-1 / JCM 10045 / NBRC 100440) (Methanococcus jannaschii)).